The primary structure comprises 152 residues: CASP-like protein 5C1 (152 aa).

Residues 1 to 12 (MVRTTASFGTSS) are Cytoplasmic-facing. A helical membrane pass occupies residues 13–33 (SFVLRLGQTLFSSASLLFMCF). Topologically, residues 34–44 (NDDEDFYAYTT) are extracellular. The helical transmembrane segment at 45 to 65 (FCYLVTVMGLVTPWSVTLALM) threads the bilayer. Residues 66-80 (EAYSILVKKLPMQAT) are Cytoplasmic-facing. Residues 81 to 101 (VISVIVAGDFVLSFLSLGGAC) traverse the membrane as a helical segment. The Extracellular portion of the chain corresponds to 102-126 (STASVAVLLMDAGEKQCDRYKLSAT). A helical membrane pass occupies residues 127-147 (MAFLSSFLSFASTFFNFCLLP). At 148-152 (SLMSH) the chain is on the cytoplasmic side.

The protein belongs to the Casparian strip membrane proteins (CASP) family. In terms of assembly, homodimer and heterodimers.

The protein resides in the cell membrane. This Arabidopsis thaliana (Mouse-ear cress) protein is CASP-like protein 5C1.